The chain runs to 243 residues: Venom nerve growth factor 1 (243 aa).

The N-terminal stretch at 1–18 is a signal peptide; sequence MSMLCYTLIIAFLIGIWA. A propeptide spanning residues 19 to 125 is cleaved from the precursor; sequence APKSEDNVPL…TLNRNIRAKR (107 aa). A compositionally biased stretch (basic and acidic residues) spans 47–66; that stretch reads GLKTSRNTDQRHPAPKKAED. The interval 47–69 is disordered; that stretch reads GLKTSRNTDQRHPAPKKAEDQEL. Disulfide bonds link cysteine 139/cysteine 204, cysteine 182/cysteine 232, and cysteine 192/cysteine 234. A glycan (N-linked (GlcNAc...) asparagine) is linked at asparagine 148.

This sequence belongs to the NGF-beta family. Homodimer; non-covalently linked. As to expression, expressed by the venom gland.

Its subcellular location is the secreted. Its function is as follows. Nerve growth factor is important for the development and maintenance of the sympathetic and sensory nervous systems. It stimulates division and differentiation of sympathetic and embryonic sensory neurons as well as basal forebrain cholinergic neurons in the brain. Its relevance in the snake venom is not clear. However, it has been shown to inhibit metalloproteinase-dependent proteolysis of platelet glycoprotein Ib alpha, suggesting a metalloproteinase inhibition to prevent metalloprotease autodigestion and/or protection against prey proteases. Binds a lipid between the two protein chains in the homodimer. The lipid-bound form promotes histamine relase from mouse mast cells, contrary to the lipid-free form. The polypeptide is Venom nerve growth factor 1 (Oxyuranus microlepidotus (Inland taipan)).